Here is a 61-residue protein sequence, read N- to C-terminus: Large ribosomal subunit protein eL37 (61 aa).

Zn(2+)-binding residues include Cys-19, Cys-22, Cys-34, and Cys-37. The C4-type zinc-finger motif lies at 19–37 (CRRCGRNAYNVSKHYCAAC).

Belongs to the eukaryotic ribosomal protein eL37 family. The cofactor is Zn(2+).

Its function is as follows. Binds to the 23S rRNA. The chain is Large ribosomal subunit protein eL37 from Saccharolobus islandicus (strain L.S.2.15 / Lassen #1) (Sulfolobus islandicus).